Here is a 243-residue protein sequence, read N- to C-terminus: Probable transcriptional regulatory protein BDI_1233 (243 aa).

The protein belongs to the TACO1 family.

The protein resides in the cytoplasm. This Parabacteroides distasonis (strain ATCC 8503 / DSM 20701 / CIP 104284 / JCM 5825 / NCTC 11152) protein is Probable transcriptional regulatory protein BDI_1233.